The primary structure comprises 846 residues: Arsenate respiratory reductase molybdopterin-containing subunit ArrA (846 aa).

Residues 1 to 29 (MRIKRREFLKASAAVGAVAVASPTLNAFA) constitute a signal peptide (tat-type signal). The 4Fe-4S Mo/W bis-MGD-type domain occupies 43–99 (GKWIPSTCQGCTTWCPVEFLFRMAVRSKYAATQLSKANNGYCCVRGHLMLQQLYDPD). Cys50, Cys53, Cys57, and Cys85 together coordinate [4Fe-4S] cluster. Arg155 lines the arsenite pocket. Tyr156 serves as a coordination point for arsenate. His179 serves as a coordination point for arsenite. Ser180 contacts arsenate. Cys183 is a binding site for Mo-bis(molybdopterin guanine dinucleotide). Lys188 is a binding site for arsenate. Arsenite is bound at residue Tyr200.

The protein belongs to the prokaryotic molybdopterin-containing oxidoreductase family. Heterodimer composed of one large subunit (ArrA) and one small subunit (ArrB). The cofactor is [4Fe-4S] cluster. It depends on Mo-bis(molybdopterin guanine dinucleotide) as a cofactor. In terms of processing, predicted to be exported by the Tat system. The position of the signal peptide cleavage has been experimentally proven.

It localises to the periplasm. It catalyses the reaction arsenite + A + H2O = arsenate + AH2 + H(+). In terms of biological role, component of the arsenate respiratory reductase (Arr) complex, which catalyzes the reduction of arsenate (As(V)) to arsenite (As(III)). Can use acetate as the electron donor. ArrA is the arsenate-binding subunit. In Chrysiogenes arsenatis, this protein is Arsenate respiratory reductase molybdopterin-containing subunit ArrA.